A 73-amino-acid polypeptide reads, in one-letter code: Putative membrane protein insertion efficiency factor (73 aa).

Belongs to the UPF0161 family.

The protein localises to the cell inner membrane. Functionally, could be involved in insertion of integral membrane proteins into the membrane. The protein is Putative membrane protein insertion efficiency factor of Neisseria gonorrhoeae (strain ATCC 700825 / FA 1090).